The following is a 393-amino-acid chain: Probable tRNA sulfurtransferase (393 aa).

In terms of domain architecture, THUMP spans 61–168; it reads DEVIESLTRV…GDVINIYSIE (108 aa). Residues 186-187, 211-212, arginine 268, glycine 290, and glutamine 299 contribute to the ATP site; these read LL and YF.

Belongs to the ThiI family.

Its subcellular location is the cytoplasm. The catalysed reaction is [ThiI sulfur-carrier protein]-S-sulfanyl-L-cysteine + a uridine in tRNA + 2 reduced [2Fe-2S]-[ferredoxin] + ATP + H(+) = [ThiI sulfur-carrier protein]-L-cysteine + a 4-thiouridine in tRNA + 2 oxidized [2Fe-2S]-[ferredoxin] + AMP + diphosphate. It carries out the reaction [ThiS sulfur-carrier protein]-C-terminal Gly-Gly-AMP + S-sulfanyl-L-cysteinyl-[cysteine desulfurase] + AH2 = [ThiS sulfur-carrier protein]-C-terminal-Gly-aminoethanethioate + L-cysteinyl-[cysteine desulfurase] + A + AMP + 2 H(+). The protein operates within cofactor biosynthesis; thiamine diphosphate biosynthesis. In terms of biological role, catalyzes the ATP-dependent transfer of a sulfur to tRNA to produce 4-thiouridine in position 8 of tRNAs, which functions as a near-UV photosensor. Also catalyzes the transfer of sulfur to the sulfur carrier protein ThiS, forming ThiS-thiocarboxylate. This is a step in the synthesis of thiazole, in the thiamine biosynthesis pathway. The sulfur is donated as persulfide by IscS. This chain is Probable tRNA sulfurtransferase, found in Lachnospira eligens (strain ATCC 27750 / DSM 3376 / VPI C15-48 / C15-B4) (Eubacterium eligens).